A 287-amino-acid polypeptide reads, in one-letter code: 2-dehydro-3-deoxyphosphooctonate aldolase (287 aa).

It belongs to the KdsA family.

The protein resides in the cytoplasm. The enzyme catalyses D-arabinose 5-phosphate + phosphoenolpyruvate + H2O = 3-deoxy-alpha-D-manno-2-octulosonate-8-phosphate + phosphate. Its pathway is carbohydrate biosynthesis; 3-deoxy-D-manno-octulosonate biosynthesis; 3-deoxy-D-manno-octulosonate from D-ribulose 5-phosphate: step 2/3. It functions in the pathway bacterial outer membrane biogenesis; lipopolysaccharide biosynthesis. The sequence is that of 2-dehydro-3-deoxyphosphooctonate aldolase from Caulobacter vibrioides (strain ATCC 19089 / CIP 103742 / CB 15) (Caulobacter crescentus).